We begin with the raw amino-acid sequence, 122 residues long: U1 small nuclear ribonucleoprotein C (122 aa).

The Matrin-type zinc-finger motif lies at 4–36 (YFCDYCDTYLTHDSPSVRKTHCSGRKHKDNVKM).

Belongs to the U1 small nuclear ribonucleoprotein C family. U1 snRNP is composed of the 7 core Sm proteins B/B', D1, D2, D3, E, F and G that assemble in a heptameric protein ring on the Sm site of the small nuclear RNA to form the core snRNP, and at least 3 U1 snRNP-specific proteins U1-70K, U1-A and U1-C. U1-C interacts with U1 snRNA and the 5' splice-site region of the pre-mRNA.

The protein resides in the nucleus. Component of the spliceosomal U1 snRNP, which is essential for recognition of the pre-mRNA 5' splice-site and the subsequent assembly of the spliceosome. U1-C is directly involved in initial 5' splice-site recognition for both constitutive and regulated alternative splicing. The interaction with the 5' splice-site seems to precede base-pairing between the pre-mRNA and the U1 snRNA. Stimulates commitment or early (E) complex formation by stabilizing the base pairing of the 5' end of the U1 snRNA and the 5' splice-site region. This Ciona intestinalis (Transparent sea squirt) protein is U1 small nuclear ribonucleoprotein C.